Reading from the N-terminus, the 678-residue chain is ATP-dependent RNA helicase DHX58 (678 aa).

In terms of domain architecture, Helicase ATP-binding spans 11 to 188 (IMPALEGKNI…DGAINHVLQL (178 aa)). 24–31 (LPTGAGKT) serves as a coordination point for ATP. Residues 131-134 (DECH) carry the DECH box motif. Residues 350–514 (KLEMLEKILQ…QAVAAVQKMD (165 aa)) enclose the Helicase C-terminal domain. Residues 489-546 (ELKRELINEALETLMEQAVAAVQKMDQAEYQAKIRDLQQAALTKRAAQAAQRENQRQQ) are a coiled coil. The RLR CTR domain maps to 539–669 (QRENQRQQFP…PDFDFLQHCA (131 aa)). Residues Cys-556, Cys-559, Cys-612, and Cys-615 each contribute to the Zn(2+) site. Residues 572–655 (VEGTHHVNVN…RIQAKKWSRV (84 aa)) form an RNA-binding region.

It belongs to the helicase family. RLR subfamily. Monomer in the absence of dsRNA. Homodimer in the presence of dsRNA. Interacts with RIGI (via CARD domain), MAVS/IPS1 and DDX60. Found in a complex with RIGI and IFIH1/MDA5. Interacts with ANKRD17. Directly interacts with ATG5 and ATG12, either as ATG5 and ATG12 monomers or as ATG12-ATG5 conjugates. In terms of assembly, (Microbial infection) Interacts (via helicase C-terminal domain) with non-structural protein V of paramyxoviruses including human parainfluenza 2 virus, human parainfluenza 5 virus, measles virus, mumps virus, hendra virus and nipah virus. As to expression, expressed in testis, nerve and spleen. Also expressed in the brain.

Its subcellular location is the cytoplasm. The enzyme catalyses ATP + H2O = ADP + phosphate + H(+). Functionally, acts as a regulator of RIGI and IFIH1/MDA5 mediated antiviral signaling. Cannot initiate antiviral signaling as it lacks the CARD domain required for activating MAVS/IPS1-dependent signaling events. Can have both negative and positive regulatory functions related to RIGI and IFIH1/MDA5 signaling and this role in regulating signaling may be complex and could probably depend on characteristics of the infecting virus or target cells, or both. Its inhibitory action on RIG-I signaling may involve the following mechanisms: competition with RIGI for binding to the viral RNA, binding to RIGI and inhibiting its dimerization and interaction with MAVS/IPS1, competing with IKBKE in its binding to MAVS/IPS1 thereby inhibiting activation of interferon regulatory factor 3 (IRF3). Its positive regulatory role may involve unwinding or stripping nucleoproteins of viral RNA thereby facilitating their recognition by RIGI and IFIH1/MDA5. Involved in the innate immune response to various RNA viruses and some DNA viruses such as poxviruses and coronavirus SARS-CoV-2, and also to the bacterial pathogen Listeria monocytogenes. Can bind both ssRNA and dsRNA, with a higher affinity for dsRNA. Shows a preference to 5'-triphosphorylated RNA, although it can recognize RNA lacking a 5'-triphosphate. The protein is ATP-dependent RNA helicase DHX58 of Homo sapiens (Human).